The primary structure comprises 357 residues: SrfA-induced gene J protein (357 aa).

The tract at residues 1–29 (MGRVEDQIKDNYNSLSHEGERLNREAKIE) is disordered. Residues 5-51 (EDQIKDNYNSLSHEGERLNREAKIESEKLKNNAKLDAKDMKKDIDES) adopt a coiled-coil conformation. The segment covering 17–29 (HEGERLNREAKIE) has biased composition (basic and acidic residues). N-linked (GlcNAc...) asparagine glycans are attached at residues N114, N157, and N172. Coiled-coil stretches lie at residues 150–177 (KNFKRTANETQKDANRLTSDVKNESNKI) and 223–270 (DETK…DAIE). A helical membrane pass occupies residues 290–307 (IWGSIGLIGGATATSYLF).

Its subcellular location is the membrane. The protein is SrfA-induced gene J protein (sigJ) of Dictyostelium discoideum (Social amoeba).